A 488-amino-acid polypeptide reads, in one-letter code: Probable glycine dehydrogenase (decarboxylating) subunit 2 (488 aa).

An N6-(pyridoxal phosphate)lysine modification is found at K274.

Belongs to the GcvP family. C-terminal subunit subfamily. The glycine cleavage system is composed of four proteins: P, T, L and H. In this organism, the P 'protein' is a heterodimer of two subunits. Pyridoxal 5'-phosphate is required as a cofactor.

The catalysed reaction is N(6)-[(R)-lipoyl]-L-lysyl-[glycine-cleavage complex H protein] + glycine + H(+) = N(6)-[(R)-S(8)-aminomethyldihydrolipoyl]-L-lysyl-[glycine-cleavage complex H protein] + CO2. In terms of biological role, the glycine cleavage system catalyzes the degradation of glycine. The P protein binds the alpha-amino group of glycine through its pyridoxal phosphate cofactor; CO(2) is released and the remaining methylamine moiety is then transferred to the lipoamide cofactor of the H protein. In Listeria monocytogenes serotype 4b (strain F2365), this protein is Probable glycine dehydrogenase (decarboxylating) subunit 2.